We begin with the raw amino-acid sequence, 103 residues long: UPF0145 protein Rsph17025_2361 (103 aa).

Belongs to the UPF0145 family.

This Cereibacter sphaeroides (strain ATCC 17025 / ATH 2.4.3) (Rhodobacter sphaeroides) protein is UPF0145 protein Rsph17025_2361.